The sequence spans 286 residues: 3-hydroxybutyryl-CoA dehydrogenase (286 aa).

Belongs to the 3-hydroxyacyl-CoA dehydrogenase family.

The catalysed reaction is 3-hydroxybutanoyl-CoA + NAD(+) = acetoacetyl-CoA + NADH + H(+). The enzyme catalyses (3S)-3-hydroxybutanoyl-CoA + NADP(+) = acetoacetyl-CoA + NADPH + H(+). The protein operates within lipid metabolism; butanoate metabolism. The chain is 3-hydroxybutyryl-CoA dehydrogenase (fadB2) from Mycobacterium tuberculosis (strain CDC 1551 / Oshkosh).